Reading from the N-terminus, the 263-residue chain is MLIWSPKGRAAAGVVASVLFIVFFFLPLAVILMSSLSQRWNGILPSGFTLNHFVNALHGAAWDALLASLTIGFCASLFALLCGVWAALALRQYGVKTQKWLSMVFYLPSAIPSVSVGLGILVAFSQGPLQMNGTLWIVLTAHFVLISAFTFSNVSTGLARISADIENVASSLGASPWYRLRHVTLPLLMPWMVSELALSLSLSMGELGATVMIYPPGWTTLPVAIFSLTDRGNIADGAALTIVLVAITLLLMMKLERIAKRLG.

6 helical membrane passes run glycine 13–methionine 33, leucine 69–alanine 89, valine 104–phenylalanine 124, methionine 131–phenylalanine 151, leucine 185–glycine 205, and asparagine 233–methionine 253. In terms of domain architecture, ABC transmembrane type-1 spans leucine 65 to methionine 253.

It belongs to the binding-protein-dependent transport system permease family.

The protein localises to the cell inner membrane. Its function is as follows. Probably part of the PhnSTUV complex (TC 3.A.1.11.5) involved in 2-aminoethylphosphonate import. Probably responsible for the translocation of the substrate across the membrane. The chain is Putative 2-aminoethylphosphonate transport system permease protein PhnV (phnV) from Salmonella typhi.